Reading from the N-terminus, the 368-residue chain is MNLTFKNLQQQKFVISDVSADTKISELKEKIQTQQNYEVERQKLIYSGRILADDKTVGEYNIKEQDFIVCMVSRPKTSTSTPKSAASPAPNPPASVPEKKVEAPSSTVAESTSTTQTVAAAAPSNPDTTATSEAPIDANTLAVGAQRNVAVENMVEMGYERSEVERAMRAAFNNPDRAVEYLLTGIPEDILNRQREESAAALAAQQQQSEALAPTSTGQPANLFEQAALSENENQEQPSNTVGDDPLGFLRSIPQFQQLRQIVQQNPQMLETILQQIGQGDPALAQAITQNPEAFLQLLAEGAEGESALPSGGIQIQITQEESESIDRLCQLGFDRNIVIQAYLACDKNEELAANYLFEHGHESEDEP.

The Ubiquitin-like domain occupies 1 to 77 (MNLTFKNLQQ…IVCMVSRPKT (77 aa)). 2 stretches are compositionally biased toward low complexity: residues 76 to 88 (KTSTSTPKSAASP) and 103 to 124 (APSSTVAESTSTTQTVAAAAPS). The tract at residues 76–134 (KTSTSTPKSAASPAPNPPASVPEKKVEAPSSTVAESTSTTQTVAAAAPSNPDTTATSEA) is disordered. 2 positions are modified to phosphoserine: serine 84 and serine 87. UBA domains follow at residues 135–185 (PIDA…LLTG) and 320–360 (QEES…LFEH). A Phosphoserine modification is found at serine 364.

The protein localises to the nucleus. Functionally, involved in postreplication repair of UV-damaged DNA. Postreplication repair functions in gap-filling of a daughter strand on replication of damaged DNA. Protects ubiquitin chains against dissambly by deubiquitinating enzymes thereby promoting protein degradation. This is UV excision repair protein rhp23 (rhp23) from Schizosaccharomyces pombe (strain 972 / ATCC 24843) (Fission yeast).